We begin with the raw amino-acid sequence, 246 residues long: Probable transcriptional regulatory protein HD_0596 (246 aa).

This sequence belongs to the TACO1 family.

It localises to the cytoplasm. In Haemophilus ducreyi (strain 35000HP / ATCC 700724), this protein is Probable transcriptional regulatory protein HD_0596.